A 743-amino-acid polypeptide reads, in one-letter code: POU domain, class 2, transcription factor 1 (743 aa).

Residues 1 to 11 (MNNPSETSKPS) show a composition bias toward polar residues. Disordered stretches follow at residues 1–34 (MNNP…QPVP), 67–95 (SLNV…SVQA), 258–283 (ATPI…EEPS), and 357–381 (SSDS…RRRK). Residues 81–95 (SQQPSQPSQQPSVQA) are compositionally biased toward low complexity. Thr-270 and Thr-276 each carry phosphothreonine. In terms of domain architecture, POU-specific spans 280–354 (EEPSDLEELE…LLEKWLNDAE (75 aa)). Position 283 is a phosphoserine (Ser-283). Low complexity predominate over residues 357 to 371 (SSDSSLSSPSALNSP). A DNA-binding region (homeobox) is located at residues 379–438 (RRKKRTSIETNIRVALEKSFLENQKPTSEEITMIADQLNMEKEVIRVWFCNRRQKEKRIN). 2 positions are modified to phosphoserine: Ser-385 and Ser-448. The segment covering 494–504 (VTGTSDTTSNN) has biased composition (polar residues). The interval 494–557 (VTGTSDTTSN…TTSTPLSSPL (64 aa)) is disordered. Low complexity predominate over residues 505 to 557 (TATVISTAPPASSAVTSPSLSPSPSASASTSEASSASETSTTQTTSTPLSSPL).

Belongs to the POU transcription factor family. Class-2 subfamily. Interacts with POU2AF1; the interaction increases POU2F1 transactivation activity. Interacts with NR3C1, AR, PGR and HCFC1. In terms of assembly, (Microbial infection) Associates with the herpes simplex virus VP16-induced complex; binding to HCFC1 activates the viral transcriptional activator VP16 for association with POU2F1, to form a multiprotein-DNA complex responsible for activating transcription of the viral immediate early genes. As to quaternary structure, (Microbial infection) Interacts with human herpesvirus 8 (KSHV) protein RTA/ORF50; this interaction enhances RTA/ORF50-mediated transactivation of several viral promoters including K-bZIP promoter. Phosphorylated by PRKDC. As to expression, ubiquitous. Isoform 2 is lymphocyte-specific.

It is found in the nucleus. Its function is as follows. Transcription factor that binds to the octamer motif (5'-ATTTGCAT-3') and activates the promoters of the genes for some small nuclear RNAs (snRNA) and of genes such as those for histone H2B and immunoglobulins. Modulates transcription transactivation by NR3C1, AR and PGR. In terms of biological role, (Microbial infection) In case of human herpes simplex virus (HSV) infection, POU2F1 forms a multiprotein-DNA complex with the viral transactivator protein VP16 and HCFC1 thereby enabling the transcription of the viral immediate early genes. This is POU domain, class 2, transcription factor 1 (POU2F1) from Homo sapiens (Human).